Here is a 455-residue protein sequence, read N- to C-terminus: Ribulose bisphosphate carboxylase large chain (455 aa).

N6,N6,N6-trimethyllysine is present on Lys5. Positions 114 and 164 each coordinate substrate. The active-site Proton acceptor is Lys166. Substrate is bound at residue Lys168. 3 residues coordinate Mg(2+): Lys192, Asp194, and Glu195. The residue at position 192 (Lys192) is an N6-carboxylysine. The Proton acceptor role is filled by His285. Arg286, His318, and Ser370 together coordinate substrate.

Belongs to the RuBisCO large chain family. Type I subfamily. Heterohexadecamer of 8 large chains and 8 small chains; disulfide-linked. The disulfide link is formed within the large subunit homodimers. The cofactor is Mg(2+). The disulfide bond which can form in the large chain dimeric partners within the hexadecamer appears to be associated with oxidative stress and protein turnover.

The protein resides in the plastid. It localises to the chloroplast. The enzyme catalyses 2 (2R)-3-phosphoglycerate + 2 H(+) = D-ribulose 1,5-bisphosphate + CO2 + H2O. It catalyses the reaction D-ribulose 1,5-bisphosphate + O2 = 2-phosphoglycolate + (2R)-3-phosphoglycerate + 2 H(+). In terms of biological role, ruBisCO catalyzes two reactions: the carboxylation of D-ribulose 1,5-bisphosphate, the primary event in carbon dioxide fixation, as well as the oxidative fragmentation of the pentose substrate in the photorespiration process. Both reactions occur simultaneously and in competition at the same active site. The polypeptide is Ribulose bisphosphate carboxylase large chain (Lupinus paraguariensis (Lupine)).